The following is a 223-amino-acid chain: 7-cyano-7-deazaguanine synthase (223 aa).

15-25 (FSGGQDSTTCL) is an ATP binding site. Zn(2+)-binding residues include Cys191, Cys200, Cys203, and Cys206.

The protein belongs to the QueC family. Homodimer. Zn(2+) is required as a cofactor.

It catalyses the reaction 7-carboxy-7-deazaguanine + NH4(+) + ATP = 7-cyano-7-deazaguanine + ADP + phosphate + H2O + H(+). Its pathway is purine metabolism; 7-cyano-7-deazaguanine biosynthesis. Functionally, catalyzes the ATP-dependent conversion of 7-carboxy-7-deazaguanine (CDG) to 7-cyano-7-deazaguanine (preQ(0)). This Staphylococcus saprophyticus subsp. saprophyticus (strain ATCC 15305 / DSM 20229 / NCIMB 8711 / NCTC 7292 / S-41) protein is 7-cyano-7-deazaguanine synthase.